Here is a 1132-residue protein sequence, read N- to C-terminus: Telomerase reverse transcriptase (1132 aa).

An RNA-interacting domain 1 region spans residues 1–230 (MPRAPRCRAV…ARRRGGSASR (230 aa)). Positions 58-197 (VPWDARPPPA…PHASGPRRRL (140 aa)) are GQ motif. The tract at residues 137–141 (WGLLL) is required for regulating specificity for telomeric DNA and for processivity for primer elongation. Residues 210–320 (AGVPLGLPAP…SRPPRPWDTP (111 aa)) form a disordered region. The span at 213-234 (PLGLPAPGARRRGGSASRSLPL) shows a compositional bias: low complexity. The Bipartite nuclear localization signal motif lies at 222–240 (RRRGGSASRSLPLPKRPRR). S227 is modified (phosphoserine; by PKB/AKT1). The segment at 231-324 (SLPLPKRPRR…RPWDTPCPPV (94 aa)) is linker. Positions 293 to 304 (RHSHPSVGRQHH) are enriched in basic residues. The interval 301–538 (RQHHAGPPST…VPAAEHRLRE (238 aa)) is required for oligomerization. Positions 310–320 (TSRPPRPWDTP) are enriched in pro residues. An RNA-interacting domain 2 region spans residues 325–550 (YAETKHFLYS…LAKFLHWLMS (226 aa)). The TFLY; involved in RNA binding signature appears at 328 to 333 (TKHFLY). The interval 376 to 521 (PRRLPRLPQR…MSVRDCAWLR (146 aa)) is QFP motif. The CP motif stretch occupies residues 397 to 417 (LGNHAQCPYGVLLKTHCPLRA). Phosphoserine; by DYRK2 is present on S457. Positions 605-935 (EVRQHREARP…GLFPWCGLLL (331 aa)) constitute a Reverse transcriptase domain. Y707 carries the phosphotyrosine; by SRC-type Tyr-kinases modification. Mg(2+) is bound by residues D712, D868, and D869. The tract at residues 914 to 928 (LGGTAFVQMPAHGLF) is required for oligomerization. Residues 930–934 (WCGLL) form a primer grip sequence region. The tract at residues 936–1132 (DTRTLEVQSD…LPSDFKTILD (197 aa)) is CTE.

This sequence belongs to the reverse transcriptase family. Telomerase subfamily. As to quaternary structure, catalytic component of the telomerase holoenzyme complex composed of one molecule of TERT, one molecule of WRAP53/TCAB1, two molecules of H/ACA ribonucleoprotein complex subunits DKC1, NOP10, NHP2 and GAR1, and a telomerase RNA template component (TERC). The telomerase holoenzyme complex is associated with TEP1, SMG6/EST1A and POT1. The molecular chaperone HSP90/P23 complex is required for correct assembly and stabilization of the active telomerase. Interacts directly with HSP90A and PTGES3. Interacts with HSPA1A; the interaction occurs in the absence of TERC and dissociates once the complex has formed. Interacts with RAN; the interaction promotes nuclear export of TERT. Interacts with XPO1. Interacts with PTPN11; the interaction retains TERT in the nucleus. Interacts with NCL (via RRM1 and C-terminal RRM4/Arg/Gly-rich domains); the interaction is important for nucleolar localization of TERT. Interacts with SMARCA4 (via the bromodomain); the interaction regulates Wnt-mediated signaling. Interacts with MCRS1 (isoform MCRS2); the interaction inhibits in vitro telomerase activity. Interacts with PIF1; the interaction has no effect on the elongation activity of TERT. Interacts with PML; the interaction recruits TERT to PML bodies and inhibits telomerase activity. Interacts with GNL3L. Interacts with isoform 1 and isoform 2 of NVL. Interacts with DHX36. Interacts with ATF7. Post-translationally, phosphorylation at Tyr-707 under oxidative stress leads to translocation of TERT to the cytoplasm and reduces its antiapoptotic activity. Dephosphorylated by SHP2/PTPN11 leading to nuclear retention. Phosphorylation at Ser-227 by the AKT pathway promotes nuclear location. Phosphorylation at the G2/M phase at Ser-457 by DYRK2 promotes ubiquitination by the EDVP complex and degradation. In terms of processing, ubiquitinated by the EDVP complex, a E3 ligase complex following phosphorylation at Ser-457 by DYRK2. Ubiquitinated leads to proteasomal degradation. (Microbial infection) In case of infection by HIV-1, the EDVP complex is hijacked by HIV-1 via interaction between HIV-1 Vpr and DCAF1/VPRBP, leading to ubiquitination and degradation. As to expression, expressed at a high level in thymocyte subpopulations, at an intermediate level in tonsil T-lymphocytes, and at a low to undetectable level in peripheral blood T-lymphocytes.

Its subcellular location is the nucleus. The protein resides in the nucleolus. It is found in the nucleoplasm. The protein localises to the chromosome. It localises to the telomere. Its subcellular location is the cytoplasm. The protein resides in the PML body. The enzyme catalyses DNA(n) + a 2'-deoxyribonucleoside 5'-triphosphate = DNA(n+1) + diphosphate. Functionally, telomerase is a ribonucleoprotein enzyme essential for the replication of chromosome termini in most eukaryotes. Active in progenitor and cancer cells. Inactive, or very low activity, in normal somatic cells. Catalytic component of the teleromerase holoenzyme complex whose main activity is the elongation of telomeres by acting as a reverse transcriptase that adds simple sequence repeats to chromosome ends by copying a template sequence within the RNA component of the enzyme. Catalyzes the RNA-dependent extension of 3'-chromosomal termini with the 6-nucleotide telomeric repeat unit, 5'-TTAGGG-3'. The catalytic cycle involves primer binding, primer extension and release of product once the template boundary has been reached or nascent product translocation followed by further extension. More active on substrates containing 2 or 3 telomeric repeats. Telomerase activity is regulated by a number of factors including telomerase complex-associated proteins, chaperones and polypeptide modifiers. Modulates Wnt signaling. Plays important roles in aging and antiapoptosis. The protein is Telomerase reverse transcriptase (TERT) of Homo sapiens (Human).